We begin with the raw amino-acid sequence, 526 residues long: GMP synthase [glutamine-hydrolyzing] (526 aa).

A Glutamine amidotransferase type-1 domain is found at 8–208; the sequence is CILIIDFGSQ…AVDICRCEVT (201 aa). The active-site Nucleophile is Cys85. Catalysis depends on residues His182 and Glu184. One can recognise a GMPS ATP-PPase domain in the interval 209–401; sequence WKPVYIVKNI…LGLPLNVVNQ (193 aa). An ATP-binding site is contributed by 236–242; that stretch reads SGGIDSL.

Homodimer.

The catalysed reaction is XMP + L-glutamine + ATP + H2O = GMP + L-glutamate + AMP + diphosphate + 2 H(+). Its pathway is purine metabolism; GMP biosynthesis; GMP from XMP (L-Gln route): step 1/1. Functionally, catalyzes the synthesis of GMP from XMP. This chain is GMP synthase [glutamine-hydrolyzing], found in Blochmanniella floridana.